The primary structure comprises 122 residues: MIKREDRRQLRLVRHKRLRKKIFGTPERPRLAVFRSEKHMYAQIIDDTKGITLVAASTVEKAMKEKLQKTWNITAAKEVGKLIAERALAKGIKEVVFDRGGFKYHGRVKALADAAREAGLKF.

The protein belongs to the universal ribosomal protein uL18 family. Part of the 50S ribosomal subunit; part of the 5S rRNA/L5/L18/L25 subcomplex. Contacts the 5S and 23S rRNAs.

In terms of biological role, this is one of the proteins that bind and probably mediate the attachment of the 5S RNA into the large ribosomal subunit, where it forms part of the central protuberance. The sequence is that of Large ribosomal subunit protein uL18 from Fervidobacterium nodosum (strain ATCC 35602 / DSM 5306 / Rt17-B1).